The sequence spans 585 residues: Arginine--tRNA ligase (585 aa).

The short motif at 130–140 is the 'HIGH' region element; that stretch reads ANPTGPMHVGH.

This sequence belongs to the class-I aminoacyl-tRNA synthetase family. As to quaternary structure, monomer.

The protein localises to the cytoplasm. The catalysed reaction is tRNA(Arg) + L-arginine + ATP = L-arginyl-tRNA(Arg) + AMP + diphosphate. This chain is Arginine--tRNA ligase, found in Methylorubrum extorquens (strain CM4 / NCIMB 13688) (Methylobacterium extorquens).